A 1187-amino-acid chain; its full sequence is Intraflagellar transport protein 122 homolog (1187 aa).

8 WD repeats span residues 16–54, 57–97, 99–135, 137–175, 180–223, 225–264, 266–306, and 459–498; these read KVEQ…LIQP, GHKD…LKYT, NDSI…VSKH, VSSK…KVKI, GSSS…IGKD, SLTF…LGSI, EQNA…HGLY, and KQNT…LLFQ. The interval 1070–1094 is disordered; it reads KSWQEMSSGESQCLKLEDGPDDPED.

As to quaternary structure, component of the IFT complex A (IFT-A) complex.

The protein resides in the cell projection. Its subcellular location is the cilium. It localises to the cytoplasm. It is found in the cytoskeleton. The protein localises to the cilium basal body. Functionally, required for cilia formation during embryonal development. Acts as a negative regulator of Shh signaling. The chain is Intraflagellar transport protein 122 homolog (ift122) from Danio rerio (Zebrafish).